Here is a 150-residue protein sequence, read N- to C-terminus: Arginine repressor (150 aa).

Belongs to the ArgR family.

It localises to the cytoplasm. It participates in amino-acid biosynthesis; L-arginine biosynthesis [regulation]. Functionally, regulates arginine biosynthesis genes. This is Arginine repressor from Staphylococcus carnosus (strain TM300).